The following is a 219-amino-acid chain: Kappa-scoloptoxin(11)-Ss1a (219 aa).

Positions 1-16 are cleaved as a signal peptide; that stretch reads MFYSHLLFFTFTFACS. Residues 17–25 constitute a propeptide that is removed on maturation; it reads SSLNRKTKR.

Contains 8 disulfide bonds. Expressed by the venom gland.

It localises to the secreted. Voltage-gated potassium channel inhibitor. The protein is Kappa-scoloptoxin(11)-Ss1a of Scolopendra dehaani (Thai centipede).